A 287-amino-acid polypeptide reads, in one-letter code: uncharacterized protein (287 aa).

This is an uncharacterized protein from Archaeoglobus fulgidus (strain ATCC 49558 / DSM 4304 / JCM 9628 / NBRC 100126 / VC-16).